The primary structure comprises 465 residues: Glutamate--tRNA ligase (465 aa).

A 'HIGH' region motif is present at residues 10–20; that stretch reads PSPTGQLHIGG. Zn(2+) is bound by residues Cys99, Cys101, Cys126, and Glu128. Positions 236 to 240 match the 'KMSKS' region motif; sequence KLSKR. ATP is bound at residue Lys239.

It belongs to the class-I aminoacyl-tRNA synthetase family. Glutamate--tRNA ligase type 1 subfamily. As to quaternary structure, monomer. Zn(2+) is required as a cofactor.

The protein localises to the cytoplasm. The enzyme catalyses tRNA(Glu) + L-glutamate + ATP = L-glutamyl-tRNA(Glu) + AMP + diphosphate. Its function is as follows. Catalyzes the attachment of glutamate to tRNA(Glu) in a two-step reaction: glutamate is first activated by ATP to form Glu-AMP and then transferred to the acceptor end of tRNA(Glu). The polypeptide is Glutamate--tRNA ligase (Lawsonia intracellularis (strain PHE/MN1-00)).